A 107-amino-acid polypeptide reads, in one-letter code: Phosphoribosyl-ATP pyrophosphatase (107 aa).

It belongs to the PRA-PH family.

It is found in the cytoplasm. It catalyses the reaction 1-(5-phospho-beta-D-ribosyl)-ATP + H2O = 1-(5-phospho-beta-D-ribosyl)-5'-AMP + diphosphate + H(+). It functions in the pathway amino-acid biosynthesis; L-histidine biosynthesis; L-histidine from 5-phospho-alpha-D-ribose 1-diphosphate: step 2/9. This is Phosphoribosyl-ATP pyrophosphatase from Bacillus mycoides (strain KBAB4) (Bacillus weihenstephanensis).